The sequence spans 344 residues: MAAATELNRPSSGDRNLERRCRPNLSREVLYEIFRSLHTLVGQLDLRDDVVKITIDWNKLQSLSAFQPALLFSALEQHILYLQPFLAKLQSPIKEENTTAVEEIGRTEMGNKNEVNDKFSIGDLQEEEKHKESDLRDVKKTQIHFDPEVVQIKAGKAEIDRRISAFIERKQAEINENNVREFCNVIDCNQENSCARTDAIFTPYPGFKSHVKVSRVVNTYGPQTRPEGIPGSGHKPNSMLRDCGNQAVEERLQNIEAHLRLQTGGPVPRDIYQRIKKLEDKILELEGISPEYFQSVSFSGKRRKVQPPQQNYSLAELDEKISALKQALLRKSREAESMATHHLP.

Ser91 carries the post-translational modification Phosphoserine. Glycyl lysine isopeptide (Lys-Gly) (interchain with G-Cter in SUMO2) cross-links involve residues Lys94, Lys118, Lys129, Lys139, Lys153, and Lys235. The segment at 172–344 (AEINENNVRE…AESMATHHLP (173 aa)) is interaction with MAP3K12. Positions 271–285 (IYQRIKKLEDKILEL) are leucine-zipper 1. An N6-acetyllysine; alternate modification is found at Lys301. A Glycyl lysine isopeptide (Lys-Gly) (interchain with G-Cter in SUMO2); alternate cross-link involves residue Lys301. Glycyl lysine isopeptide (Lys-Gly) (interchain with G-Cter in SUMO2) cross-links involve residues Lys304 and Lys325. The leucine-zipper 2 stretch occupies residues 314-329 (LAELDEKISALKQALL).

In terms of assembly, component of the ADA2A-containing complex (ATAC), composed of KAT14, KAT2A, TADA2L, TADA3L, ZZ3, MBIP, WDR5, YEATS2, CCDC101 and DR1. In the complex, it probably interacts directly with KAT2A, KAT14 and WDR5. As to expression, ubiquitous. High expression seen in the heart and lung.

Its subcellular location is the nucleus. The protein resides in the cytoplasm. Its function is as follows. Inhibits the MAP3K12 activity to induce the activation of the JNK/SAPK pathway. Component of the ATAC complex, a complex with histone acetyltransferase activity on histones H3 and H4. The polypeptide is MAP3K12-binding inhibitory protein 1 (MBIP) (Homo sapiens (Human)).